An 886-amino-acid chain; its full sequence is DNA gyrase subunit A (886 aa).

The Topo IIA-type catalytic domain maps to 35-501 (LPDVRDGLKP…GFEDLEDEDL (467 aa)). Tyr-123 serves as the catalytic O-(5'-phospho-DNA)-tyrosine intermediate. A GyrA-box motif is present at residues 528-534 (QNRGGRG). The tract at residues 810-860 (VKEDADEENEDEQSTVSEDGTEQQREAVVNDETPGNAIHTEVIDSEVNDED) is disordered. Positions 813–822 (DADEENEDEQ) are enriched in acidic residues.

Belongs to the type II topoisomerase GyrA/ParC subunit family. As to quaternary structure, heterotetramer, composed of two GyrA and two GyrB chains. In the heterotetramer, GyrA contains the active site tyrosine that forms a transient covalent intermediate with DNA, while GyrB binds cofactors and catalyzes ATP hydrolysis.

It localises to the cytoplasm. It catalyses the reaction ATP-dependent breakage, passage and rejoining of double-stranded DNA.. In terms of biological role, a type II topoisomerase that negatively supercoils closed circular double-stranded (ds) DNA in an ATP-dependent manner to modulate DNA topology and maintain chromosomes in an underwound state. Negative supercoiling favors strand separation, and DNA replication, transcription, recombination and repair, all of which involve strand separation. Also able to catalyze the interconversion of other topological isomers of dsDNA rings, including catenanes and knotted rings. Type II topoisomerases break and join 2 DNA strands simultaneously in an ATP-dependent manner. This is DNA gyrase subunit A from Staphylococcus aureus (strain MRSA252).